A 358-amino-acid chain; its full sequence is MAATLGSGERWTEAYIDAVRRNKYPEDRPPESHDPCGCCNCMKGQKEKKSENEWSQTRQGEGNSTYTEEQLLGVQRIKKCRNYYEILGVSRDASDEELKKAYRKLALKFHPDKNCAPGATDAFKAIGNAFAVLSNPDKRLRYDEYGDEQVTFTAPRARPYNYYRDFETDITPEELFNVFFGGHFPTGNIHMFSNVTDDTHYYRRRHRHERMQTRKEEEEDKPQTTYSAFIQLLPVLVIVIISVITQLLAANPPYSLFYKSTLGHTISRETQNLQVPYFVDKNFDKAYRGASLRDLEKTIEKDYIDYIQTSCWKEKQQKSELTNLAGLYRDERLKQKAESLKLENCEKLSKLIGLRRGG.

In terms of domain architecture, J spans 82 to 146 (NYYEILGVSR…DKRLRYDEYG (65 aa)). A helical membrane pass occupies residues 228-248 (AFIQLLPVLVIVIISVITQLL).

The protein localises to the endoplasmic reticulum membrane. The chain is DnaJ homolog subfamily C member 18 (DNAJC18) from Bos taurus (Bovine).